Reading from the N-terminus, the 399-residue chain is 4-hydroxyphenylpyruvate dioxygenase (399 aa).

VOC domains are found at residues 23 to 166 and 197 to 355; these read GYDH…LIER and RIDH…LFTK. The Fe cation site is built by His200, His283, and Glu366.

The protein belongs to the 4HPPD family. It depends on Fe cation as a cofactor.

The catalysed reaction is 3-(4-hydroxyphenyl)pyruvate + O2 = homogentisate + CO2. The protein operates within amino-acid degradation; L-phenylalanine degradation; acetoacetate and fumarate from L-phenylalanine: step 3/6. The protein is 4-hydroxyphenylpyruvate dioxygenase (TCRP) of Coccidioides posadasii (strain C735) (Valley fever fungus).